The chain runs to 817 residues: Ribonuclease R 1 (817 aa).

Residues 259 to 584 (RVDYRNEITF…DLLVHRLIRE (326 aa)) form the RNB domain. An S1 motif domain is found at 637–717 (GEEYEGIIAS…MTGEIDFEYL (81 aa)). Residues 728-817 (AKAKKKPDHK…DGRKKPHKRG (90 aa)) are disordered. Residues 729–742 (KAKKKPDHKGRKKS) show a composition bias toward basic residues. Composition is skewed to basic and acidic residues over residues 767–777 (RRADEKFEFDK) and 795–810 (KFTD…TDGR).

This sequence belongs to the RNR ribonuclease family. RNase R subfamily.

The protein localises to the cytoplasm. The catalysed reaction is Exonucleolytic cleavage in the 3'- to 5'-direction to yield nucleoside 5'-phosphates.. Its function is as follows. 3'-5' exoribonuclease that releases 5'-nucleoside monophosphates and is involved in maturation of structured RNAs. The polypeptide is Ribonuclease R 1 (rnr1) (Lactococcus lactis subsp. lactis (strain IL1403) (Streptococcus lactis)).